The chain runs to 224 residues: Ribonuclease 3 (224 aa).

The 123-residue stretch at L4 to N126 folds into the RNase III domain. E39 contributes to the Mg(2+) binding site. The active site involves D43. Mg(2+) contacts are provided by D112 and E115. E115 is an active-site residue. One can recognise a DRBM domain in the interval D153–I223.

This sequence belongs to the ribonuclease III family. Homodimer. Requires Mg(2+) as cofactor.

Its subcellular location is the cytoplasm. It carries out the reaction Endonucleolytic cleavage to 5'-phosphomonoester.. In terms of biological role, digests double-stranded RNA. Involved in the processing of primary rRNA transcript to yield the immediate precursors to the large and small rRNAs (23S and 16S). Processes some mRNAs, and tRNAs when they are encoded in the rRNA operon. Processes pre-crRNA and tracrRNA of type II CRISPR loci if present in the organism. The chain is Ribonuclease 3 from Actinobacillus succinogenes (strain ATCC 55618 / DSM 22257 / CCUG 43843 / 130Z).